A 218-amino-acid polypeptide reads, in one-letter code: Ras-related protein Rab-27B (218 aa).

Thr2 carries the post-translational modification N-acetylthreonine. 16 to 24 (GDSGVGKTT) contacts GTP. Positions 38 to 46 (FITTVGIDF) match the Effector region motif. Residues 74-78 (DTAGQ), 133-136 (NKAD), and 163-165 (SAA) contribute to the GTP site. Cysteines 123 and 188 form a disulfide. The disordered stretch occupies residues 194–218 (IPDTVNGGNSGNLDGEKPPEKKCIC). Over residues 207–218 (DGEKPPEKKCIC) the composition is skewed to basic and acidic residues. 2 S-geranylgeranyl cysteine lipidation sites follow: Cys216 and Cys218. Cys218 is modified (cysteine methyl ester).

Belongs to the small GTPase superfamily. Rab family. As to quaternary structure, interacts with SYTL2, SYTL4, MYRIP and MLPH. Interacts with RPH3A and RPH3A. Interacts (GDP-bound form preferentially) with DENND10. Expressed primarily in testis.

It is found in the membrane. It localises to the late endosome. It carries out the reaction GTP + H2O = GDP + phosphate + H(+). Regulated by guanine nucleotide exchange factors (GEFs) which promote the exchange of bound GDP for free GTP, GTPase activating proteins (GAPs) which increase the GTP hydrolysis activity, and GDP dissociation inhibitors which inhibit the dissociation of the nucleotide from the GTPase. Activated by GEFs such as DENND10. In terms of biological role, small GTPase which cycles between active GTP-bound and inactive GDP-bound states. In its active state, binds to a variety of effector proteins to regulate homeostasis of late endocytic pathway, including endosomal positioning, maturation and secretion. Plays a role in NTRK2/TRKB axonal anterograde transport by facilitating the association of NTRK2/TRKB with KLC1. May be involved in targeting uroplakins to urothelial apical membranes. The polypeptide is Ras-related protein Rab-27B (RAB27B) (Homo sapiens (Human)).